Here is a 148-residue protein sequence, read N- to C-terminus: Glutamyl-tRNA(Gln) amidotransferase subunit C, mitochondrial (148 aa).

Residues 1–10 (MLRLLNKRFY) constitute a mitochondrion transit peptide.

The protein belongs to the GatC family. As to quaternary structure, subunit of the heterotrimeric GatCAB amidotransferase (AdT) complex, composed of A, B and C subunits.

Its subcellular location is the mitochondrion. It carries out the reaction L-glutamyl-tRNA(Gln) + L-glutamine + ATP + H2O = L-glutaminyl-tRNA(Gln) + L-glutamate + ADP + phosphate + H(+). Its function is as follows. Allows the formation of correctly charged Gln-tRNA(Gln) through the transamidation of misacylated Glu-tRNA(Gln) in the mitochondria. The reaction takes place in the presence of glutamine and ATP through an activated gamma-phospho-Glu-tRNA(Gln). The protein is Glutamyl-tRNA(Gln) amidotransferase subunit C, mitochondrial of Drosophila ananassae (Fruit fly).